The chain runs to 378 residues: MEQLSAANTRFALDLFRALNESNPAGNIFISPFSISSALAMILLGTRGNTEAQMSKALHFDTVKDIHSRFQSLNADINKCGASYILKLANRLFGEKTYHFLPEFLASTQKTYGAELASVDFLRASEEARKAINEWVKEQTEGKIPELLASGVVDSATKLVLVNAIYFKGSWQEKFMTEATKDAPFRLNKKDSKTVKMMYQKKKFPFGYIKELKCRVLELPYQGKDLSMVILLPDSIEDESTGLRKIEQHLTLEKLNEWTKPDNLELLEVNVHLPRFRLEESYDLNAPLARLGVQDLFGSRADLTGMSEARDLFISKVVHKAFVEVNEEGTEAAAATAGIAVFAMLMPEEDFIADHPFIFFIRHNPSSNILFLGRLSSP.

At methionine 1 the chain carries N-acetylmethionine. Lysine 137 is subject to N6-acetyllysine. At serine 299 the chain carries Phosphoserine. Residues aspartate 350–proline 378 form a CARD-binding motif (CBM) region.

The protein belongs to the serpin family. Ov-serpin subfamily. Monomer. Interacts (via C-terminus) with CASP1; CASP4 (via CARD domain) and CASP5; these interactions regulate the activity of inflammatory caspases. Interacts with PRTN3. Interacts with GZMH.

It localises to the secreted. The protein localises to the cytoplasm. The protein resides in the cytolytic granule. It is found in the early endosome. Neutrophil serine protease inhibitor that plays an essential role in the regulation of the innate immune response, inflammation and cellular homeostasis. Acts primarily to protect the cell from proteases released in the cytoplasm during stress or infection. These proteases are important in killing microbes but when released from granules, these potent enzymes also destroy host proteins and contribute to mortality. Regulates the activity of the neutrophil proteases elastase, cathepsin G, proteinase-3, chymase, chymotrypsin, and kallikrein-3. Also acts as a potent intracellular inhibitor of GZMH by directly blocking its proteolytic activity. During inflammation, limits the activity of inflammatory caspases CASP1, CASP4 and CASP5 by suppressing their caspase-recruitment domain (CARD) oligomerization and enzymatic activation. When secreted, promotes the proliferation of beta-cells via its protease inhibitory function. In terms of biological role, may be cleaved leading to a loss of its anti-protease activity and to the appearance of an endonuclease activity. However no catalytic site was identified. This chain is Leukocyte elastase inhibitor (SERPINB1), found in Sus scrofa (Pig).